Reading from the N-terminus, the 232-residue chain is Leucyl/phenylalanyl-tRNA--protein transferase (232 aa).

This sequence belongs to the L/F-transferase family.

It is found in the cytoplasm. The catalysed reaction is N-terminal L-lysyl-[protein] + L-leucyl-tRNA(Leu) = N-terminal L-leucyl-L-lysyl-[protein] + tRNA(Leu) + H(+). It catalyses the reaction N-terminal L-arginyl-[protein] + L-leucyl-tRNA(Leu) = N-terminal L-leucyl-L-arginyl-[protein] + tRNA(Leu) + H(+). The enzyme catalyses L-phenylalanyl-tRNA(Phe) + an N-terminal L-alpha-aminoacyl-[protein] = an N-terminal L-phenylalanyl-L-alpha-aminoacyl-[protein] + tRNA(Phe). Its function is as follows. Functions in the N-end rule pathway of protein degradation where it conjugates Leu, Phe and, less efficiently, Met from aminoacyl-tRNAs to the N-termini of proteins containing an N-terminal arginine or lysine. This is Leucyl/phenylalanyl-tRNA--protein transferase from Nitrosospira multiformis (strain ATCC 25196 / NCIMB 11849 / C 71).